The primary structure comprises 523 residues: MNLEEHLSLGEFHVSNLIKNHISRGSPIQALVLYGGIRRRGVYFPGWVPLILRACACVVPRVVLGKLLHSESIKFGVCSDVMVGSSLISMYGKCGCVVSARKVFDEMPERNVATWNAMIGGYMSNGDAVLASGLFEEISVCRNTVTWIEMIKGYGKRIEIEKARELFERMPFELKNVKAWSVMLGVYVNNRKMEDARKFFEDIPEKNAFVWSLMMSGYFRIGDVHEARAIFYRVFARDLVIWNTLIAGYAQNGYSDDAIDAFFNMQGEGYEPDAVTVSSILSACAQSGRLDVGREVHSLINHRGIELNQFVSNALIDMYAKCGDLENATSVFESISVRSVACCNSMISCLAIHGKGKEALEMFSTMESLDLKPDEITFIAVLTACVHGGFLMEGLKIFSEMKTQDVKPNVKHFGCLIHLLGRSGKLKEAYRLVKEMHVKPNDTVLGALLGACKVHMDTEMAEQVMKIIETAGSITNSYSENHLASISNLYAHTERWQTAEALRVEMEKRGLEKSPGLSSLVLT.

PPR repeat units lie at residues 10–43 (GEFH…RGVY), 44–79 (FPGW…GVCS), 80–114 (DVMV…NVAT), 115–141 (WNAM…ISVC), 143–173 (NTVT…MPFE), 176–210 (NVKA…NAFV), 211–237 (WSLM…VFAR), 238–272 (DLVI…GYEP), 273–307 (DAVT…GIEL), 308–338 (NQFV…ISVR), 339–373 (SVAC…DLKP), 374–408 (DEIT…DVKP), and 409–439 (NVKH…MHVK). The type E motif stretch occupies residues 444 to 523 (VLGALLGACK…SPGLSSLVLT (80 aa)).

It belongs to the PPR family. PCMP-E subfamily.

The polypeptide is Pentatricopeptide repeat-containing protein At3g21470 (PCMP-E29) (Arabidopsis thaliana (Mouse-ear cress)).